An 89-amino-acid chain; its full sequence is Acylphosphatase (89 aa).

Residues 3–89 (RFTARVAGLV…QSDLTDFRRK (87 aa)) form the Acylphosphatase-like domain. Active-site residues include Arg18 and Asn36.

This sequence belongs to the acylphosphatase family.

It carries out the reaction an acyl phosphate + H2O = a carboxylate + phosphate + H(+). This chain is Acylphosphatase (acyP), found in Frankia casuarinae (strain DSM 45818 / CECT 9043 / HFP020203 / CcI3).